The following is a 230-amino-acid chain: Small ribosomal subunit protein uS3 (230 aa).

The KH type-2 domain occupies 39 to 107; it reads VRKFLVEKLQ…PAQINIAEIR (69 aa).

This sequence belongs to the universal ribosomal protein uS3 family. In terms of assembly, part of the 30S ribosomal subunit. Forms a tight complex with proteins S10 and S14.

Binds the lower part of the 30S subunit head. Binds mRNA in the 70S ribosome, positioning it for translation. The chain is Small ribosomal subunit protein uS3 from Shewanella baltica (strain OS223).